Consider the following 570-residue polypeptide: Periplasmic trehalase (570 aa).

Residues 1-34 (MIPPEIRRSVLLQKAIKLALAGTLLTFASFSATA) form the signal peptide. Substrate contacts are provided by residues arginine 159, 166–167 (WD), asparagine 203, 212–214 (RSQ), 284–286 (RPE), and glycine 317. Active-site proton donor/acceptor residues include aspartate 319 and glutamate 503. Glutamate 518 lines the substrate pocket. Positions 544 to 570 (KPCDSVPSTRPASLSATPTKTPSAATQ) are disordered. A compositionally biased stretch (low complexity) spans 554 to 570 (PASLSATPTKTPSAATQ).

Belongs to the glycosyl hydrolase 37 family. Monomer.

The protein localises to the periplasm. The catalysed reaction is alpha,alpha-trehalose + H2O = alpha-D-glucose + beta-D-glucose. Functionally, provides the cells with the ability to utilize trehalose at high osmolarity by splitting it into glucose molecules that can subsequently be taken up by the phosphotransferase-mediated uptake system. The sequence is that of Periplasmic trehalase from Salmonella dublin (strain CT_02021853).